The primary structure comprises 221 residues: uncharacterized protein (221 aa).

A signal peptide spans 1 to 18 (MKRFLLLIILFGISFSFV).

This is an uncharacterized protein from Aquifex aeolicus (strain VF5).